We begin with the raw amino-acid sequence, 535 residues long: MTDQTTRLPIRRALISVSDKTGILEFARELEALGVEILSTGGTFKLLQDNGVAAVEVADYTGFAEMMDGRVKTLHPKIHGGILGRRGIDDAIMTEHGIKPIDLVAVNLYPFEATINKPGCDLPTAIENIDIGGPTMVRSAAKNHKDVAIVVNASDYAQVLESLKAGGLTYAQRFDLMLKAFEHTAAYDGMIANYMGTVNQAAETLSTEGRSQFPRTFNSQFIKAQEMRYGENPHQSAAFYVEAKPAEVGIATATQLQGKELSYNNVADTDAALECVKSFVKPACVIVKHANPCGVAVSPDAEGGIRQAYELAYATDTESAFGGIIAFNRELDAETAKAIVERQFVEVIIAPSVSEEARAIVAAKANVRLLACGEWSADRAAAWDYKRVNGGLLVQSRDIGMIGSEDLKVVTKRAPTEQEINDLIFAWKVAKYVKSNAIVYAKNRQTIGVGAGQMSRVNSARIAAIKAEHAGLQVVGSVMASDAFFPFRDGLDNAAKAGVTAVIQPGGSMRDAEVIAAADEAGIAMVFTGMRHFRH.

In terms of domain architecture, MGS-like spans 6–151 (TRLPIRRALI…KNHKDVAIVV (146 aa)).

This sequence belongs to the PurH family.

It carries out the reaction (6R)-10-formyltetrahydrofolate + 5-amino-1-(5-phospho-beta-D-ribosyl)imidazole-4-carboxamide = 5-formamido-1-(5-phospho-D-ribosyl)imidazole-4-carboxamide + (6S)-5,6,7,8-tetrahydrofolate. It catalyses the reaction IMP + H2O = 5-formamido-1-(5-phospho-D-ribosyl)imidazole-4-carboxamide. The protein operates within purine metabolism; IMP biosynthesis via de novo pathway; 5-formamido-1-(5-phospho-D-ribosyl)imidazole-4-carboxamide from 5-amino-1-(5-phospho-D-ribosyl)imidazole-4-carboxamide (10-formyl THF route): step 1/1. It functions in the pathway purine metabolism; IMP biosynthesis via de novo pathway; IMP from 5-formamido-1-(5-phospho-D-ribosyl)imidazole-4-carboxamide: step 1/1. This is Bifunctional purine biosynthesis protein PurH from Pseudomonas fluorescens (strain SBW25).